Here is a 557-residue protein sequence, read N- to C-terminus: Formate--tetrahydrofolate ligase 2 (557 aa).

Position 66–73 (66–73 (TPAGEGKT)) interacts with ATP.

The protein belongs to the formate--tetrahydrofolate ligase family.

It carries out the reaction (6S)-5,6,7,8-tetrahydrofolate + formate + ATP = (6R)-10-formyltetrahydrofolate + ADP + phosphate. Its pathway is one-carbon metabolism; tetrahydrofolate interconversion. The sequence is that of Formate--tetrahydrofolate ligase 2 from Streptococcus pyogenes serotype M3 (strain ATCC BAA-595 / MGAS315).